The primary structure comprises 336 residues: Glycerol-3-phosphate dehydrogenase [NAD(P)+] (336 aa).

The NADPH site is built by Trp16 and Lys109. 3 residues coordinate sn-glycerol 3-phosphate: Lys109, Gly137, and Ser139. Position 141 (Ala141) interacts with NADPH. Sn-glycerol 3-phosphate contacts are provided by Lys192, Asp245, Ser255, Arg256, and Asn257. Lys192 acts as the Proton acceptor in catalysis. NADPH is bound at residue Arg256. NADPH contacts are provided by Val280 and Glu282.

It belongs to the NAD-dependent glycerol-3-phosphate dehydrogenase family.

Its subcellular location is the cytoplasm. It catalyses the reaction sn-glycerol 3-phosphate + NAD(+) = dihydroxyacetone phosphate + NADH + H(+). The catalysed reaction is sn-glycerol 3-phosphate + NADP(+) = dihydroxyacetone phosphate + NADPH + H(+). It functions in the pathway membrane lipid metabolism; glycerophospholipid metabolism. Its function is as follows. Catalyzes the reduction of the glycolytic intermediate dihydroxyacetone phosphate (DHAP) to sn-glycerol 3-phosphate (G3P), the key precursor for phospholipid synthesis. This is Glycerol-3-phosphate dehydrogenase [NAD(P)+] from Hyphomonas neptunium (strain ATCC 15444).